The chain runs to 1001 residues: Translation initiation factor IF-2 (1001 aa).

The disordered stretch occupies residues 34–404; the sequence is KSHSSTISES…SRGDRRDRKE (371 aa). Positions 67 to 80 are enriched in basic and acidic residues; that stretch reads SRPESKEDKSDPKQ. Pro residues-rich tracts occupy residues 98–107, 147–157, and 163–172; these read PARPTPPPRP, PTQPLAPPPVP, and PSKPAPPTPP. Residues 173–190 show a composition bias toward low complexity; sequence AKKAAPAPRLAGPPGRTA. Composition is skewed to basic and acidic residues over residues 212 to 230 and 238 to 252; these read SLKD…EEKV and PKPK…PPRP. Positions 332 to 342 are enriched in acidic residues; it reads DDDDDDLDIDG. Composition is skewed to low complexity over residues 362–371 and 385–394; these read KSLAAKPSTP and AGSSAGGSSR. Basic and acidic residues predominate over residues 395-404; sequence SRGDRRDRKE. A tr-type G domain is found at 493-666; that stretch reads RRPPVVTIMG…LLVSEVEELV (174 aa). Residues 502 to 509 form a G1 region; it reads GHVDHGKT. 502–509 provides a ligand contact to GTP; that stretch reads GHVDHGKT. The G2 stretch occupies residues 527–531; the sequence is GITQH. The segment at 552-555 is G3; that stretch reads DTPG. Residues 552–556 and 606–609 contribute to the GTP site; these read DTPGH and NKVD. Residues 606–609 are G4; that stretch reads NKVD. Residues 642 to 644 form a G5 region; the sequence is SAL.

It belongs to the TRAFAC class translation factor GTPase superfamily. Classic translation factor GTPase family. IF-2 subfamily.

It is found in the cytoplasm. Functionally, one of the essential components for the initiation of protein synthesis. Protects formylmethionyl-tRNA from spontaneous hydrolysis and promotes its binding to the 30S ribosomal subunits. Also involved in the hydrolysis of GTP during the formation of the 70S ribosomal complex. The polypeptide is Translation initiation factor IF-2 (infB) (Synechocystis sp. (strain ATCC 27184 / PCC 6803 / Kazusa)).